We begin with the raw amino-acid sequence, 272 residues long: Orotidine 5'-phosphate decarboxylase (272 aa).

Lys95 acts as the Proton donor in catalysis.

It belongs to the OMP decarboxylase family. Type 2 subfamily.

It catalyses the reaction orotidine 5'-phosphate + H(+) = UMP + CO2. Its pathway is pyrimidine metabolism; UMP biosynthesis via de novo pathway; UMP from orotate: step 2/2. This is Orotidine 5'-phosphate decarboxylase from Cupriavidus necator (strain ATCC 17699 / DSM 428 / KCTC 22496 / NCIMB 10442 / H16 / Stanier 337) (Ralstonia eutropha).